Reading from the N-terminus, the 147-residue chain is Hemoglobin subunit beta (147 aa).

In terms of domain architecture, Globin spans 3–147 (EWTDKERSII…VVSALGKQYH (145 aa)). Positions 64 and 93 each coordinate heme b.

This sequence belongs to the globin family. As to quaternary structure, hb1 is a heterotetramer of two alpha chains and two beta chains. In terms of tissue distribution, red blood cells.

In terms of biological role, involved in oxygen transport from gills to the various peripheral tissues. In Trematomus bernacchii (Emerald rockcod), this protein is Hemoglobin subunit beta (hbb).